The sequence spans 89 residues: Small ribosomal subunit protein uS15 (89 aa).

It belongs to the universal ribosomal protein uS15 family. Part of the 30S ribosomal subunit. Forms a bridge to the 50S subunit in the 70S ribosome, contacting the 23S rRNA.

Its function is as follows. One of the primary rRNA binding proteins, it binds directly to 16S rRNA where it helps nucleate assembly of the platform of the 30S subunit by binding and bridging several RNA helices of the 16S rRNA. Functionally, forms an intersubunit bridge (bridge B4) with the 23S rRNA of the 50S subunit in the ribosome. The chain is Small ribosomal subunit protein uS15 from Thermus thermophilus (strain ATCC BAA-163 / DSM 7039 / HB27).